A 695-amino-acid chain; its full sequence is UvrABC system protein C (695 aa).

A compositionally biased stretch (basic and acidic residues) spans 1-10 (MNHDPAETRD). The disordered stretch occupies residues 1–44 (MNHDPAETRDTAAAPLADTESPSPVSPELTPHPAPAAQDIDTAT). In terms of domain architecture, GIY-YIG spans 88 to 166 (TSPGVYRMLN…IKQLRPRFNV (79 aa)). A UVR domain is found at 276–311 (RAVKQELAVEMEKASNELEFETAALYRDRLAALSAI).

This sequence belongs to the UvrC family. In terms of assembly, interacts with UvrB in an incision complex.

The protein localises to the cytoplasm. The UvrABC repair system catalyzes the recognition and processing of DNA lesions. UvrC both incises the 5' and 3' sides of the lesion. The N-terminal half is responsible for the 3' incision and the C-terminal half is responsible for the 5' incision. In Rhodopseudomonas palustris (strain HaA2), this protein is UvrABC system protein C.